Here is a 377-residue protein sequence, read N- to C-terminus: Adenosine 3'-phospho 5'-phosphosulfate transporter 2 (377 aa).

A run of 10 helical transmembrane segments spans residues 50–70 (LCCGGVFALYLVYGYMQELIF), 77–97 (PYGWYLTLVQFAYYTAFGYIE), 115–135 (ALLAFLTLGTMGLSNSSVGYL), 138–158 (PTQVIFKCCKLIPVLIGSVLI), 164–184 (GPMDFFAATAMCLGLILFTLA), 195–215 (FGVFLISLALLCDAAIGNVQE), 228–248 (VVIYSYGIGFVYLAVIMLLSG), 266–286 (GYAFLFSLTGYLGIQIVLTLV), 293–313 (LAATVTTARKAVTIALSFVFF), and 317–337 (FTIQYLWSGLIVVFGIYLNVY).

It belongs to the nucleotide-sugar transporter family. SLC35B subfamily.

It localises to the golgi apparatus membrane. Its function is as follows. Mediates the transport of adenosine 3'-phospho 5'-phosphosulfate (PAPS), from cytosol into Golgi. PAPS is a universal sulfuryl donor for sulfation events that take place in the Golgi. Essential for viability. Involved in glycosaminoglycan synthesis and the subsequent signaling. May be involved in hh and dpp signaling by controlling the sulfation of heparan sulfate (HS). This chain is Adenosine 3'-phospho 5'-phosphosulfate transporter 2, found in Anopheles gambiae (African malaria mosquito).